The following is a 557-amino-acid chain: CCR4-NOT transcription complex subunit 6 (557 aa).

4 LRR repeats span residues 52-73 (HLTA…IAKL), 75-96 (NLVY…LGNM), 98-120 (SLRE…GKLF), and 121-143 (QLQT…YQEP). Positions 153–557 (LLDNLSGTAK…VNGIHLPGRR (405 aa)) are nuclease domain. Residue E240 participates in Mg(2+) binding. The substrate site is built by E240, E276, H361, and P366. Position 412 (D412) interacts with Mg(2+). Residue D412 is the Proton donor/acceptor of the active site. Substrate-binding residues include N414, N481, and F486.

This sequence belongs to the CCR4/nocturin family. As to quaternary structure, component of the CCR4-NOT complex; distinct complexes seem to exist that differ in the participation of probably mutually exclusive catalytic subunits; the complex contains two deadenylase subunits, CNOT6 or CNOT6L, and CNOT7 or CNOT8. Interacts with CNOT7 and CNOT8. Interacts with UNR. Interacts with ZFP36L1 (via N-terminus). Interacts with ZNF335. The cofactor is Mg(2+).

Its subcellular location is the cytoplasm. The protein resides in the nucleus. It catalyses the reaction Exonucleolytic cleavage of poly(A) to 5'-AMP.. Functionally, poly(A) nuclease with 3'-5' RNase activity. Catalytic component of the CCR4-NOT complex which is one of the major cellular mRNA deadenylases and is linked to various cellular processes including bulk mRNA degradation, miRNA-mediated repression, translational repression during translational initiation and general transcription regulation. Additional complex functions may be a consequence of its influence on mRNA expression. Involved in mRNA decay mediated by the major-protein-coding determinant of instability (mCRD) of the FOS gene in the cytoplasm. In the presence of ZNF335, enhances ligand-dependent transcriptional activity of nuclear hormone receptors, including RARA. The increase of ligand-dependent ESR1-mediated transcription is much smaller, if any. Mediates cell proliferation and cell survival and prevents cellular senescence. The polypeptide is CCR4-NOT transcription complex subunit 6 (CNOT6) (Homo sapiens (Human)).